The chain runs to 343 residues: Hydroxycarboxylic acid receptor 1 (343 aa).

Residues 1 to 21 are Extracellular-facing; the sequence is MDNGSCCLIEGEPISQVMPPL. A glycan (N-linked (GlcNAc...) asparagine) is linked at asparagine 3. The chain crosses the membrane as a helical span at residues 22-42; sequence LILVFVLGALGNGIALCGFCF. The Cytoplasmic segment spans residues 43 to 49; sequence HMKTWKS. A helical transmembrane segment spans residues 50–70; the sequence is STIYLFNLAVADFLLMICLPL. Over 71–90 the chain is Extracellular; sequence RTDYYLRRRHWIFGDIACRL. A disulfide bond links cysteine 88 and cysteine 165. Residues 91-111 traverse the membrane as a helical segment; it reads VLFKLAMNRAGSIVFLTVVAV. Residues 112-131 lie on the Cytoplasmic side of the membrane; sequence DRYFKVVHPHHMVNAISNRT. A helical transmembrane segment spans residues 132–152; that stretch reads AAATACVLWTLVILGTVYLLM. The Extracellular segment spans residues 153-182; the sequence is ESHLCVQGTLSSCESFIMESANGWHDVMFQ. The helical transmembrane segment at 183-203 threads the bilayer; the sequence is LEFFLPLTIILFCSVNVVWSL. The Cytoplasmic segment spans residues 204-220; it reads RRRQQLTRQARMRRATR. The helical transmembrane segment at 221-241 threads the bilayer; it reads FIMVVASVFITCYLPSVLARL. Residues 242–259 lie on the Extracellular side of the membrane; sequence YFLWTVPTSACDPSVHTA. A helical membrane pass occupies residues 260 to 280; that stretch reads LHVTLSFTYLNSMLDPLVYYF. The Cytoplasmic portion of the chain corresponds to 281–343; sequence SSPSLPKFYT…SDGQWDLQVC (63 aa). Positions 319 to 334 are enriched in polar residues; that stretch reads CSKSSIDGANRSQRPS. Residues 319 to 343 are disordered; that stretch reads CSKSSIDGANRSQRPSDGQWDLQVC.

It belongs to the G-protein coupled receptor 1 family. Highly expressed in subcutaneous fat and omental fat and detectable in lower levels in brain and many other tissues. High levels detected in epididymal and subcutaneous fat with slightly lower in omental fat, low levels are detected in the brain, skeletal muscle, kidney, liver and the pancreas (at protein level).

The protein localises to the cell membrane. Functionally, acts as a receptor for L-lactate and mediates its anti-lipolytic effect through a G(i)-protein-mediated pathway. The polypeptide is Hydroxycarboxylic acid receptor 1 (Hcar1) (Mus musculus (Mouse)).